The sequence spans 121 residues: Large ribosomal subunit protein bL17 (121 aa).

The protein belongs to the bacterial ribosomal protein bL17 family. Part of the 50S ribosomal subunit. Contacts protein L32.

This is Large ribosomal subunit protein bL17 from Mycoplasmopsis agalactiae (strain NCTC 10123 / CIP 59.7 / PG2) (Mycoplasma agalactiae).